The following is a 95-amino-acid chain: Aspartyl/glutamyl-tRNA(Asn/Gln) amidotransferase subunit C (95 aa).

Basic and acidic residues predominate over residues 55–67 (ALERRNVTREDQV). Residues 55–83 (ALERRNVTREDQVHNSLTNDKALENAPET) form a disordered region.

The protein belongs to the GatC family. As to quaternary structure, heterotrimer of A, B and C subunits.

The enzyme catalyses L-glutamyl-tRNA(Gln) + L-glutamine + ATP + H2O = L-glutaminyl-tRNA(Gln) + L-glutamate + ADP + phosphate + H(+). It carries out the reaction L-aspartyl-tRNA(Asn) + L-glutamine + ATP + H2O = L-asparaginyl-tRNA(Asn) + L-glutamate + ADP + phosphate + 2 H(+). In terms of biological role, allows the formation of correctly charged Asn-tRNA(Asn) or Gln-tRNA(Gln) through the transamidation of misacylated Asp-tRNA(Asn) or Glu-tRNA(Gln) in organisms which lack either or both of asparaginyl-tRNA or glutaminyl-tRNA synthetases. The reaction takes place in the presence of glutamine and ATP through an activated phospho-Asp-tRNA(Asn) or phospho-Glu-tRNA(Gln). The sequence is that of Aspartyl/glutamyl-tRNA(Asn/Gln) amidotransferase subunit C from Natranaerobius thermophilus (strain ATCC BAA-1301 / DSM 18059 / JW/NM-WN-LF).